Here is a 381-residue protein sequence, read N- to C-terminus: Sulfofructose kinase (381 aa).

ATP is bound by residues G10, 72–73 (RY), and 100–103 (GNGT). Mg(2+) is bound at residue N101. Residue D131 is the Proton acceptor of the active site.

It belongs to the phosphofructokinase type A (PFKA) family. The cofactor is Mg(2+).

The catalysed reaction is 6-deoxy-6-sulfo-D-fructose + ATP = 6-deoxy-6-sulfo-D-fructose 1-phosphate + ADP + H(+). In terms of biological role, part of the sulfo-EMP2 pathway, a D-sulfoquinovose degradation pathway that produces sulfolactate (SL). Phosphorylates 6-deoxy-6-sulfo-D-fructose (SF) to 6-deoxy-6-sulfo-D-fructose 1-phosphate (SFP). This is Sulfofructose kinase from Alkalicoccus urumqiensis (Bacillus urumqiensis).